The chain runs to 2364 residues: Spectrin beta chain, non-erythrocytic 1 (2364 aa).

An N-acetylthreonine modification is found at threonine 2. The interval 2–275 (TTTVATDYDN…IITYVVTYYH (274 aa)) is actin-binding. Phosphoserine is present on residues isoleucine 14 and serine 36. Calponin-homology (CH) domains are found at residues 54–158 (AVQK…LRFQ) and 173–278 (KSAK…HYFS). Lysine 90 is modified (N6-acetyllysine). Residue serine 228 is modified to Phosphoserine. Spectrin repeat units follow at residues 303 to 411 (MIEK…LALR), 423 to 525 (LARR…QRLE), 530 to 636 (LQKI…RLEE), 639 to 742 (RLWK…RLEE), 745 to 847 (LLHQ…ALQD), 850 to 952 (ALYK…DALL), 957 to 1060 (IQNY…SLGE), 1063 to 1166 (KLQQ…NLLS), 1170 to 1258 (AYQQ…DRHR), 1276 to 1376 (DLQK…AQRL), 1381 to 1482 (KAEL…HNLL), 1486 to 1590 (EIHQ…RLEE), 1592 to 1696 (HRAQ…KLDE), 1698 to 1801 (HRLF…TQIL), and 1805 to 1907 (YELH…RVRL). Phosphoserine is present on residues serine 817, serine 825, serine 903, serine 1057, serine 1076, serine 1079, and serine 1237. Residues serine 1388, serine 1447, and serine 1557 each carry the phosphoserine modification. Residues 1563-2093 (IRQRLADLKQ…LLEVRRQQEE (531 aa)) are interaction with ANK2. Tyrosine 1805 is modified (phosphotyrosine). 3 positions are modified to N6-acetyllysine: lysine 1815, lysine 1913, and lysine 1989. 2 Spectrin repeats span residues 1914 to 2014 (FRFF…EWLR) and 2018 to 2097 (EVHQ…EERK). The segment at 2089 to 2196 (RQQEEEERKR…TLPARTQETP (108 aa)) is disordered. 3 positions are modified to phosphoserine: serine 2102, serine 2128, and serine 2138. The segment covering 2115 to 2131 (SQQQWDTSKGEQVSQNG) has biased composition (polar residues). Positions 2145 to 2166 (VDTSEMVNGATEQRTSSKESSP) are enriched in polar residues. A Phosphothreonine modification is found at threonine 2147. Serine 2148 bears the Phosphoserine mark. Residues 2149 to 2177 (EMVNGATEQRTSSKESSPIPSPTSDRKAK) are mediates interaction with CAMSAP1. The residue at position 2159 (threonine 2159) is a Phosphothreonine. Phosphoserine is present on residues serine 2160, serine 2161, serine 2164, serine 2165, and serine 2169. At threonine 2171 the chain carries Phosphothreonine. 2 positions are modified to phosphoserine: serine 2172 and serine 2184. A compositionally biased stretch (polar residues) spans 2184 to 2196 (SAATLPARTQETP). Phosphothreonine occurs at positions 2187 and 2195. Residues 2197 to 2307 (SAQMEGFLNR…WIQAISSAIS (111 aa)) form the PH domain. The tract at residues 2309 to 2364 (DKHEVSASTQSTPASSRAQTLPTSVVTITSESSPGKREKDKEKDKEKRFSLFGKKK) is disordered. 2 positions are modified to phosphoserine: serine 2314 and serine 2319. Residues 2314 to 2341 (SASTQSTPASSRAQTLPTSVVTITSESS) are compositionally biased toward polar residues. Threonine 2320 bears the Phosphothreonine mark. Residue serine 2324 is glycosylated (O-linked (GlcNAc) serine). Threonine 2328 is modified (phosphothreonine). Phosphoserine is present on residues serine 2340 and serine 2341. Over residues 2342 to 2357 (PGKREKDKEKDKEKRF) the composition is skewed to basic and acidic residues.

This sequence belongs to the spectrin family. Interacts with CAMSAP1. Interacts with ANK2. Interacts with CPNE4 (via VWFA domain). Like erythrocyte spectrin, the spectrin-like proteins are capable to form dimers which can further associate to tetramers. Can form heterodimers with SPTAN1. Isoform Short cannot bind to the axonal protein fodaxin. As to expression, isoform 2 is present in brain, lung and kidney (at protein level).

It is found in the cytoplasm. The protein resides in the cytoskeleton. It localises to the myofibril. The protein localises to the sarcomere. Its subcellular location is the m line. It is found in the cytosol. The protein resides in the cell membrane. Fodrin, which seems to be involved in secretion, interacts with calmodulin in a calcium-dependent manner and is thus candidate for the calcium-dependent movement of the cytoskeleton at the membrane. Plays a critical role in central nervous system development and function. The protein is Spectrin beta chain, non-erythrocytic 1 (SPTBN1) of Homo sapiens (Human).